The primary structure comprises 623 residues: Glutathione import ATP-binding protein GsiA (623 aa).

ABC transporter domains lie at 15–269 and 325–564; these read VSGL…QTLL and LRSG…RKLM. ATP is bound by residues 49-56 and 357-364; these read GESGSGKS.

This sequence belongs to the ABC transporter superfamily. Glutathione importer (TC 3.A.1.5.11) family. The complex is composed of two ATP-binding proteins (GsiA), two transmembrane proteins (GsiC and GsiD) and a solute-binding protein (GsiB).

The protein localises to the cell inner membrane. The enzyme catalyses glutathione(out) + ATP + H2O = glutathione(in) + ADP + phosphate + H(+). Its function is as follows. Part of the ABC transporter complex GsiABCD involved in glutathione import. Responsible for energy coupling to the transport system. The polypeptide is Glutathione import ATP-binding protein GsiA (Salmonella typhi).